The sequence spans 251 residues: 5-oxoprolinase subunit A (251 aa).

It belongs to the LamB/PxpA family. As to quaternary structure, forms a complex composed of PxpA, PxpB and PxpC.

The enzyme catalyses 5-oxo-L-proline + ATP + 2 H2O = L-glutamate + ADP + phosphate + H(+). Catalyzes the cleavage of 5-oxoproline to form L-glutamate coupled to the hydrolysis of ATP to ADP and inorganic phosphate. This chain is 5-oxoprolinase subunit A, found in Tolumonas auensis (strain DSM 9187 / NBRC 110442 / TA 4).